Consider the following 132-residue polypeptide: Small ribosomal subunit protein uS8 (132 aa).

Belongs to the universal ribosomal protein uS8 family. Part of the 30S ribosomal subunit. Contacts proteins S5 and S12.

Its function is as follows. One of the primary rRNA binding proteins, it binds directly to 16S rRNA central domain where it helps coordinate assembly of the platform of the 30S subunit. This chain is Small ribosomal subunit protein uS8, found in Leifsonia xyli subsp. xyli (strain CTCB07).